Here is a 423-residue protein sequence, read N- to C-terminus: MGNVVAMILAGGQGTRLGVLTERIAKPAVPFGGKYRLIDFTLSNCVNSGIYRVGVLTQYRPHVLAKHIGIGRPWDLDRKDGGVEILPPYVGRNESDWYKGTANAVYQNLEFLEENDAELVLVLSGDHVYAMNYNDLIDYHLLKGADGTIACMEVPLEEASRFGIMITDVEGRIVDFEEKPPKPRSNLASLGIYVFNYEFLKRVLIEDENDPNSSHDFGKDVIPKILRENKGSLYAFRFDGYWRDVGTIRSYWEANLELVLPVPPFNLYDPNWRFFTHSEEMPPAYVAPEARTSTSLISEGAEVYGEVTNSVIFQGVRIGKGTVVKNSVIMTRTEIGENCYLENVIVAENVKIGNNVKMGVGEDAKSKLDPKIYTGLLTVVGMNSTIPDDVVIGKNCVIGVGVKPEDFKTKKLESGDFVLPREE.

Alpha-D-glucose 1-phosphate-binding positions include Tyr98, Gly163, 178 to 179, and Ser189; that span reads EK.

It belongs to the bacterial/plant glucose-1-phosphate adenylyltransferase family. Homotetramer.

It carries out the reaction alpha-D-glucose 1-phosphate + ATP + H(+) = ADP-alpha-D-glucose + diphosphate. It participates in glycan biosynthesis; glycogen biosynthesis. Involved in the biosynthesis of ADP-glucose, a building block required for the elongation reactions to produce glycogen. Catalyzes the reaction between ATP and alpha-D-glucose 1-phosphate (G1P) to produce pyrophosphate and ADP-Glc. In Thermotoga neapolitana (strain ATCC 49049 / DSM 4359 / NBRC 107923 / NS-E), this protein is Glucose-1-phosphate adenylyltransferase.